The chain runs to 59 residues: Large ribosomal subunit protein bL32 (59 aa).

The protein belongs to the bacterial ribosomal protein bL32 family.

The chain is Large ribosomal subunit protein bL32 from Limosilactobacillus reuteri (strain DSM 20016) (Lactobacillus reuteri).